Consider the following 54-residue polypeptide: Zinc-containing ferredoxin A (54 aa).

The segment at glycine 1–valine 21 is disordered. An N-terminal extension region spans residues glycine 1 to alanine 36. Residues serine 9–lysine 20 are compositionally biased toward basic and acidic residues. Zn(2+) contacts are provided by histidine 16 and histidine 19. Position 29 is an N6-methyllysine (lysine 29). Histidine 34 contacts Zn(2+). The 4Fe-4S ferredoxin-type 1 domain occupies glycine 35–alanine 54. Cysteine 45 and cysteine 51 together coordinate [3Fe-4S] cluster.

[3Fe-4S] cluster serves as cofactor. The cofactor is [4Fe-4S] cluster. It depends on Zn(2+) as a cofactor.

In terms of biological role, ferredoxins are iron-sulfur proteins that transfer electrons in a wide variety of metabolic reactions. This Sulfuracidifex metallicus (Sulfolobus metallicus) protein is Zinc-containing ferredoxin A (zfx).